A 302-amino-acid polypeptide reads, in one-letter code: Sulfate adenylyltransferase subunit 2 (302 aa).

Belongs to the PAPS reductase family. CysD subfamily. In terms of assembly, heterodimer composed of CysD, the smaller subunit, and CysN.

The enzyme catalyses sulfate + ATP + H(+) = adenosine 5'-phosphosulfate + diphosphate. The protein operates within sulfur metabolism; hydrogen sulfide biosynthesis; sulfite from sulfate: step 1/3. In terms of biological role, with CysN forms the ATP sulfurylase (ATPS) that catalyzes the adenylation of sulfate producing adenosine 5'-phosphosulfate (APS) and diphosphate, the first enzymatic step in sulfur assimilation pathway. APS synthesis involves the formation of a high-energy phosphoric-sulfuric acid anhydride bond driven by GTP hydrolysis by CysN coupled to ATP hydrolysis by CysD. The polypeptide is Sulfate adenylyltransferase subunit 2 (Escherichia coli O81 (strain ED1a)).